Consider the following 223-residue polypeptide: Voltage-dependent calcium channel gamma-1 subunit (223 aa).

The Cytoplasmic portion of the chain corresponds to 1–10 (MSQTKTAKVR). A helical membrane pass occupies residues 11–29 (VTLFFILAGGVLAMVAVVT). The Extracellular segment spans residues 30 to 109 (DHWAVLSPHL…TQKEYSISAA (80 aa)). 2 N-linked (GlcNAc...) asparagine glycosylation sites follow: Asn-43 and Asn-80. A disulfide bridge connects residues Cys-57 and Cys-81. Residues 110-130 (AIAIFSLGFIIIGSICAFLSF) traverse the membrane as a helical segment. The Cytoplasmic segment spans residues 131 to 135 (GNKRD). The chain crosses the membrane as a helical span at residues 136-156 (YLLRPASMFYAFAGLCLIVSV). At 157–180 (EVMRQSVKRMIDSEDTVWIEYYYS) the chain is on the extracellular side. The helical transmembrane segment at 181–205 (WSFACACAGFTLLFLGGLFLLLFSL) threads the bilayer. Over 206 to 223 (PRMPQNPWESCMDTESEH) the chain is Cytoplasmic.

It belongs to the PMP-22/EMP/MP20 family. CACNG subfamily. As to quaternary structure, component of a calcium channel complex consisting of a pore-forming alpha subunit (CACNA1S) and the ancillary subunits CACNB1 or CACNB2, CACNG1 and CACNA2D1. The channel complex contains alpha, beta, gamma and delta subunits in a 1:1:1:1 ratio, i.e. it contains either CACNB1 or CACNB2. In terms of processing, N-glycosylated. In terms of tissue distribution, skeletal muscle.

It is found in the cell membrane. The protein localises to the sarcolemma. In terms of biological role, regulatory subunit of the voltage-gated calcium channel that gives rise to L-type calcium currents in skeletal muscle. Regulates channel inactivation kinetics. The polypeptide is Voltage-dependent calcium channel gamma-1 subunit (Cacng1) (Rattus norvegicus (Rat)).